The chain runs to 62 residues: Large ribosomal subunit protein uL30 (62 aa).

It belongs to the universal ribosomal protein uL30 family. As to quaternary structure, part of the 50S ribosomal subunit.

In Kosmotoga olearia (strain ATCC BAA-1733 / DSM 21960 / TBF 19.5.1), this protein is Large ribosomal subunit protein uL30.